A 697-amino-acid polypeptide reads, in one-letter code: SITS-binding protein (697 aa).

The segment at 1-20 is disordered; it reads MARRAKKMASNSGDSSPEPG. Over 2-29 the chain is Cytoplasmic; the sequence is ARRAKKMASNSGDSSPEPGIKEINETWK. The helical transmembrane segment at 30 to 50 threads the bilayer; sequence GAIACLGVALLFLMTIGVLYW. N-linked (GlcNAc...) asparagine glycans are attached at residues Asn-112, Asn-134, Asn-162, Asn-386, Asn-405, and Asn-470. A run of 2 helical transmembrane segments spans residues 503 to 521 and 542 to 562; these read GLIP…FFIP and WMQI…WVFG. An N-linked (GlcNAc...) asparagine glycan is attached at Asn-568.

This sequence belongs to the glycosyl hydrolase 31 family. Homodimer; disulfide-linked. As to expression, electroplax tissue, brain (200-fold less), and heart (500-fold less).

Its subcellular location is the membrane. This glycoprotein is probably not a functional part of the chloride channel. The protein is SITS-binding protein of Tetronarce californica (Pacific electric ray).